The chain runs to 124 residues: Large ribosomal subunit protein uL22c (124 aa).

The protein belongs to the universal ribosomal protein uL22 family. As to quaternary structure, part of the 50S ribosomal subunit.

Its subcellular location is the plastid. The protein resides in the chloroplast. Its function is as follows. This protein binds specifically to 23S rRNA. Functionally, the globular domain of the protein is located near the polypeptide exit tunnel on the outside of the subunit, while an extended beta-hairpin is found that lines the wall of the exit tunnel in the center of the 70S ribosome. This is Large ribosomal subunit protein uL22c (rpl22) from Amborella trichopoda.